Reading from the N-terminus, the 550-residue chain is Putative golgin subfamily A member 6-like protein 19 (550 aa).

A compositionally biased stretch (pro residues) spans 1 to 11; it reads MWPQPRLPPHP. Residues 1–77 are disordered; it reads MWPQPRLPPH…DSATGVYGEG (77 aa). Polar residues predominate over residues 51–62; it reads NGSSPDTATSGG. Residues 157 to 405 are a coiled coil; it reads SKVEQLQDET…QERLRQQDER (249 aa). Positions 467–480 are enriched in basic and acidic residues; the sequence is KELEKSGGAEEPRG. Residues 467 to 529 form a disordered region; that stretch reads KELEKSGGAE…VGTGEAAGGA (63 aa). Low complexity-rich tracts occupy residues 484 to 499 and 517 to 529; these read AAAA…PQGA and GEAV…AGGA.

It belongs to the GOLGA6 family.

The sequence is that of Putative golgin subfamily A member 6-like protein 19 (GOLGA6L19) from Homo sapiens (Human).